A 1181-amino-acid chain; its full sequence is Pesticidal crystal protein Cry1Ae (1181 aa).

Belongs to the delta endotoxin family.

In terms of biological role, promotes colloidosmotic lysis by binding to the midgut epithelial cells of many lepidopteran larvae. In Bacillus thuringiensis subsp. alesti, this protein is Pesticidal crystal protein Cry1Ae (cry1Ae).